A 480-amino-acid chain; its full sequence is Endothelial transcription factor GATA-2 (480 aa).

A Phosphoserine modification is found at S73. At R86 the chain carries Asymmetric dimethylarginine. Residues 119-209 (SPFSKTPLHP…GSAARGEDKD (91 aa)) are disordered. Residues 143–153 (GAGGGSGGGSG) show a composition bias toward gly residues. The span at 185-203 (PSTTGAASPASSSAGGSAA) shows a compositional bias: low complexity. S192 is modified (phosphoserine). 2 GATA-type zinc fingers span residues 295 to 319 (CVNCGATATPLWRRDGTGHYLCNAC) and 349 to 373 (CANCQTTTTTLWRRNANGDPVCNAC). K389 participates in a covalent cross-link: Glycyl lysine isopeptide (Lys-Gly) (interchain with G-Cter in SUMO2). The tract at residues 448-480 (HSGHILPTPTPIHPSSSLSFGHPHPSSMVTAMG) is disordered.

As to quaternary structure, interacts with BRD3. Interacts with AR and CCAR1. Interacts with MDFIC. As to expression, endothelial cells.

It is found in the nucleus. Its function is as follows. Transcriptional activator which regulates endothelin-1 gene expression in endothelial cells. Binds to the consensus sequence 5'-AGATAG-3'. This Homo sapiens (Human) protein is Endothelial transcription factor GATA-2 (GATA2).